The chain runs to 338 residues: Probable tRNA pseudouridine synthase B (338 aa).

Aspartate 78 acts as the Nucleophile in catalysis. Residues 245–320 (LPKIILRDSA…LAATSVRIMM (76 aa)) enclose the PUA domain.

Belongs to the pseudouridine synthase TruB family. Type 2 subfamily.

The catalysed reaction is uridine(55) in tRNA = pseudouridine(55) in tRNA. Functionally, could be responsible for synthesis of pseudouridine from uracil-55 in the psi GC loop of transfer RNAs. The polypeptide is Probable tRNA pseudouridine synthase B (Methanosarcina barkeri (strain Fusaro / DSM 804)).